The sequence spans 152 residues: UPF0178 protein YPTS_2857 (152 aa).

This sequence belongs to the UPF0178 family.

The sequence is that of UPF0178 protein YPTS_2857 from Yersinia pseudotuberculosis serotype IB (strain PB1/+).